Consider the following 109-residue polypeptide: Large ribosomal subunit protein uL22 (109 aa).

This sequence belongs to the universal ribosomal protein uL22 family. As to quaternary structure, part of the 50S ribosomal subunit.

In terms of biological role, this protein binds specifically to 23S rRNA; its binding is stimulated by other ribosomal proteins, e.g. L4, L17, and L20. It is important during the early stages of 50S assembly. It makes multiple contacts with different domains of the 23S rRNA in the assembled 50S subunit and ribosome. Its function is as follows. The globular domain of the protein is located near the polypeptide exit tunnel on the outside of the subunit, while an extended beta-hairpin is found that lines the wall of the exit tunnel in the center of the 70S ribosome. This Bordetella avium (strain 197N) protein is Large ribosomal subunit protein uL22.